We begin with the raw amino-acid sequence, 205 residues long: Transcription antitermination protein NusB (205 aa).

Belongs to the NusB family.

In terms of biological role, involved in transcription antitermination. Required for transcription of ribosomal RNA (rRNA) genes. Binds specifically to the boxA antiterminator sequence of the ribosomal RNA (rrn) operons. This is Transcription antitermination protein NusB from Acaryochloris marina (strain MBIC 11017).